We begin with the raw amino-acid sequence, 208 residues long: Guanylate kinase (208 aa).

A Guanylate kinase-like domain is found at 3-181; it reads GSLFIITAAS…ALTELKAIIV (179 aa). Residue 10-17 coordinates ATP; that stretch reads AASGTGKT.

The protein belongs to the guanylate kinase family.

It localises to the cytoplasm. It catalyses the reaction GMP + ATP = GDP + ADP. In terms of biological role, essential for recycling GMP and indirectly, cGMP. This is Guanylate kinase from Psychrobacter arcticus (strain DSM 17307 / VKM B-2377 / 273-4).